A 502-amino-acid polypeptide reads, in one-letter code: Interleukin-17 receptor B (502 aa).

A signal peptide spans 1-17 (MSLVLLSLAALCRSAVP). Over 18 to 292 (REPTVQCGSE…NKSKPGGWLP (275 aa)) the chain is Extracellular. Residues N67, N103, N156, N183, N197, and N283 are each glycosylated (N-linked (GlcNAc...) asparagine). A helical transmembrane segment spans residues 293 to 313 (LLLLSLLVATWVLVAGIYLMW). At 314–502 (RHERIKKTSF…QACHDGCCSL (189 aa)) the chain is on the cytoplasmic side. The region spanning 331–477 (PIKVLVVYPS…LMKDATAFCA (147 aa)) is the SEFIR domain.

As to quaternary structure, interacts with DAZAP2. Interacts with TRAF3IP2. In terms of tissue distribution, expressed in several endocrine tissues, mostly in fetal and adult liver, kidney, pancreas, testis, colon, brain and small intestine; not detected in peripheral blood leukocytes, lymphoid organs, and most cell lines.

The protein resides in the cell membrane. It localises to the secreted. Its function is as follows. Receptor for the pro-inflammatory cytokines IL17B and IL17E. May play a role in controlling the growth and/or differentiation of hematopoietic cells. The sequence is that of Interleukin-17 receptor B (IL17RB) from Homo sapiens (Human).